The chain runs to 397 residues: Phosphoglycerate kinase (397 aa).

Substrate-binding positions include 25–27, arginine 41, 64–67, arginine 118, and arginine 151; these read DLN and HLGR. ATP-binding positions include lysine 202, glutamate 324, and 350–353; that span reads GGDT.

This sequence belongs to the phosphoglycerate kinase family. As to quaternary structure, monomer.

The protein resides in the cytoplasm. It carries out the reaction (2R)-3-phosphoglycerate + ATP = (2R)-3-phospho-glyceroyl phosphate + ADP. It participates in carbohydrate degradation; glycolysis; pyruvate from D-glyceraldehyde 3-phosphate: step 2/5. This is Phosphoglycerate kinase from Paracidovorax citrulli (strain AAC00-1) (Acidovorax citrulli).